The following is a 232-amino-acid chain: Phosphatidylserine decarboxylase proenzyme (232 aa).

Residue Ser190 is the Schiff-base intermediate with substrate; via pyruvic acid of the active site. Pyruvic acid (Ser); by autocatalysis is present on Ser190.

Belongs to the phosphatidylserine decarboxylase family. PSD-A subfamily. Heterodimer of a large membrane-associated beta subunit and a small pyruvoyl-containing alpha subunit. It depends on pyruvate as a cofactor. Is synthesized initially as an inactive proenzyme. Formation of the active enzyme involves a self-maturation process in which the active site pyruvoyl group is generated from an internal serine residue via an autocatalytic post-translational modification. Two non-identical subunits are generated from the proenzyme in this reaction, and the pyruvate is formed at the N-terminus of the alpha chain, which is derived from the carboxyl end of the proenzyme. The post-translation cleavage follows an unusual pathway, termed non-hydrolytic serinolysis, in which the side chain hydroxyl group of the serine supplies its oxygen atom to form the C-terminus of the beta chain, while the remainder of the serine residue undergoes an oxidative deamination to produce ammonia and the pyruvoyl prosthetic group on the alpha chain.

The protein resides in the cell membrane. It catalyses the reaction a 1,2-diacyl-sn-glycero-3-phospho-L-serine + H(+) = a 1,2-diacyl-sn-glycero-3-phosphoethanolamine + CO2. It functions in the pathway phospholipid metabolism; phosphatidylethanolamine biosynthesis; phosphatidylethanolamine from CDP-diacylglycerol: step 2/2. Its function is as follows. Catalyzes the formation of phosphatidylethanolamine (PtdEtn) from phosphatidylserine (PtdSer). The protein is Phosphatidylserine decarboxylase proenzyme of Rhizobium rhizogenes (strain K84 / ATCC BAA-868) (Agrobacterium radiobacter).